The following is a 302-amino-acid chain: HTH-type transcriptional regulator GbpR (302 aa).

Residues 1–56 enclose the HTH lysR-type domain; that stretch reads MSHLRMLVMIEEHGQVSAAAAAMNMTQPAASRMLSEMEAIVKSPLCQRASRGVVLT. The segment at residues 16 to 35 is a DNA-binding region (H-T-H motif); that stretch reads VSAAAAAMNMTQPAASRMLS.

This sequence belongs to the LysR transcriptional regulatory family.

Its function is as follows. Activator of the expression of chvE when bound to its inducer and represses its expression in the absence of inducer (L-arabinose, D-fucose or D-galactose). Negatively regulates its own expression. The protein is HTH-type transcriptional regulator GbpR (gbpR) of Rhizobium radiobacter (Agrobacterium tumefaciens).